The sequence spans 802 residues: Oligophrenin-1 (802 aa).

The PH domain maps to 265–368 (QPTIEGYLYT…WMEAMDGKEP (104 aa)). Residues 380–564 (MELNEVGFKF…ILIEHFGKIY (185 aa)) form the Rho-GAP domain. Disordered stretches follow at residues 569–588 (EESA…RHKP), 607–666 (LDES…EPCP), 680–770 (GGTK…NAGE), and 783–802 (FETA…GDES). Positions 616–627 (HQTPNGTITSSI) are enriched in polar residues. Basic and acidic residues predominate over residues 716–732 (HHKEGDADSFSKVRPPG).

As to quaternary structure, interacts with HOMER1. Interacts with AMPA receptor complexes. Interacts with SH3GL2 (endophilin-A1). Interacts (via C-terminus) with NR1D1. As to expression, expressed in brain.

Its subcellular location is the postsynapse. It localises to the presynapse. The protein localises to the cell projection. The protein resides in the axon. It is found in the dendritic spine. Its subcellular location is the dendrite. It localises to the cytoplasm. Functionally, stimulates GTP hydrolysis of members of the Rho family. Its action on RHOA activity and signaling is implicated in growth and stabilization of dendritic spines, and therefore in synaptic function. Critical for the stabilization of AMPA receptors at postsynaptic sites. Critical for the regulation of synaptic vesicle endocytosis at presynaptic terminals. Required for the localization of NR1D1 to dendrites, can suppress its repressor activity and protect it from proteasomal degradation. This Homo sapiens (Human) protein is Oligophrenin-1 (OPHN1).